We begin with the raw amino-acid sequence, 431 residues long: Histidinol dehydrogenase (431 aa).

The NAD(+) site is built by Tyr-130, Gln-191, and Asn-214. Substrate contacts are provided by Ser-237, Gln-261, and His-264. Residues Gln-261 and His-264 each coordinate Zn(2+). Catalysis depends on proton acceptor residues Glu-329 and His-330. The substrate site is built by His-330, Asp-363, Glu-417, and His-422. Zn(2+) is bound at residue Asp-363. His-422 is a Zn(2+) binding site.

Belongs to the histidinol dehydrogenase family. It depends on Zn(2+) as a cofactor.

It catalyses the reaction L-histidinol + 2 NAD(+) + H2O = L-histidine + 2 NADH + 3 H(+). It participates in amino-acid biosynthesis; L-histidine biosynthesis; L-histidine from 5-phospho-alpha-D-ribose 1-diphosphate: step 9/9. Catalyzes the sequential NAD-dependent oxidations of L-histidinol to L-histidinaldehyde and then to L-histidine. The polypeptide is Histidinol dehydrogenase (Psychrobacter arcticus (strain DSM 17307 / VKM B-2377 / 273-4)).